Consider the following 373-residue polypeptide: Molybdenum import ATP-binding protein ModC (373 aa).

The region spanning 4–240 (LTPPTIRAAF…PKLPLAIARD (237 aa)) is the ABC transporter domain. An ATP-binding site is contributed by 38–45 (GPSGCGKS). Residues 299–369 (ASSILNAIAA…IKGVALAPGR (71 aa)) enclose the Mop domain.

This sequence belongs to the ABC transporter superfamily. Molybdate importer (TC 3.A.1.8) family. In terms of assembly, the complex is composed of two ATP-binding proteins (ModC), two transmembrane proteins (ModB) and a solute-binding protein (ModA).

The protein localises to the cell inner membrane. It carries out the reaction molybdate(out) + ATP + H2O = molybdate(in) + ADP + phosphate + H(+). Its function is as follows. Part of the ABC transporter complex ModABC involved in molybdenum import. Responsible for energy coupling to the transport system. The protein is Molybdenum import ATP-binding protein ModC of Rhodopseudomonas palustris (strain ATCC BAA-98 / CGA009).